The sequence spans 561 residues: Arginine--tRNA ligase (561 aa).

The 'HIGH' region signature appears at Ala-129–His-139.

It belongs to the class-I aminoacyl-tRNA synthetase family. In terms of assembly, monomer.

It localises to the cytoplasm. The catalysed reaction is tRNA(Arg) + L-arginine + ATP = L-arginyl-tRNA(Arg) + AMP + diphosphate. This is Arginine--tRNA ligase from Bordetella bronchiseptica (strain ATCC BAA-588 / NCTC 13252 / RB50) (Alcaligenes bronchisepticus).